The sequence spans 504 residues: ATP synthase subunit alpha (504 aa).

Gly171–Thr178 contacts ATP.

Belongs to the ATPase alpha/beta chains family. As to quaternary structure, F-type ATPases have 2 components, CF(1) - the catalytic core - and CF(0) - the membrane proton channel. CF(1) has five subunits: alpha(3), beta(3), gamma(1), delta(1), epsilon(1). CF(0) has three main subunits: a(1), b(2) and c(9-12). The alpha and beta chains form an alternating ring which encloses part of the gamma chain. CF(1) is attached to CF(0) by a central stalk formed by the gamma and epsilon chains, while a peripheral stalk is formed by the delta and b chains.

It localises to the cell inner membrane. The catalysed reaction is ATP + H2O + 4 H(+)(in) = ADP + phosphate + 5 H(+)(out). Functionally, produces ATP from ADP in the presence of a proton gradient across the membrane. The alpha chain is a regulatory subunit. This Sulfurovum sp. (strain NBC37-1) protein is ATP synthase subunit alpha.